The sequence spans 612 residues: MIKKSLLCTALSVTAFSGWAQDTRPDTLVVTANRFQQPRSAVLAPITVVTRQDIDRWQSTSVNDVLRRLPGVDIAQYGGMGQNSSISIRGTNASHVLVLIDGVRLNLAGVSGAADLSQFPVSLVQRIEYIRGPRSAVYGSDAIGGVVNIITTREKPGTELTAGVGSNGYQNYDVSTQQQLGENTRVTLMGDYAYTKGFDVVAYGSTGSQAQPDKDGFLSKTLYGALEHNFSDTWSGFVRGYGYDNRTNYDSYYSPGSPLLDTRKLYSQSWDAGLRFNGELIQSQLVSSYSHSKDYNYDPDYGRYDSSATLDEMKQYNVQWSNSIVVGHGNVGAGVDWQKQTTEPGTGYVTDGYDQRNTGLYLTGLQQLGDFTFEGAARSDDNSEFGRHGTWQTSAGWEFIEGYRFIASYGTSYKAPNLGQLHGYYGNSNLDPEQSKQWEGAFEGLTAGVNWRVSGYRNDIDDMIDYDPHTEKYFNEGKVRIKGVEATANFDTGPLAHTLSYDMVDSRNAITDKPLARRSKQQVKYQLDWQVYDFDWGLTYHYLGTRYDTDYVTYQPVKMGGVSLWDLAVSYPITSQLTVRGKIANRFDKDYETVYGYATAGREYTLSGSYTF.

The N-terminal stretch at 1 to 20 (MIKKSLLCTALSVTAFSGWA) is a signal peptide. Positions 26 to 33 (DTLVVTAN) match the TonB box motif. One can recognise a TBDR plug domain in the interval 38-152 (PRSAVLAPIT…IGGVVNIITT (115 aa)). Cyanocob(III)alamin-binding positions include S85, N92, and 110–111 (VS). Residues 155-612 (KPGTELTAGV…EYTLSGSYTF (458 aa)) form the TBDR beta-barrel domain. Beta stranded transmembrane passes span 158-165 (TELTAGVG), 169-178 (YQNYDVSTQQ), and 184-195 (TRVTLMGDYAYT). Positions 199, 211, 213, and 215 each coordinate Ca(2+). The next 2 membrane-spanning stretches (beta stranded) occupy residues 217–227 (FLSKTLYGALE) and 232–248 (DTWS…NRTN). The Ca(2+) site is built by Y249, D250, and D261. 14 beta stranded membrane passes run 263–277 (RKLY…LRFN), 279–296 (ELIQ…KDYN), 309–325 (TLDE…NSIV), 328–337 (HGNVGAGVDW), 353–369 (YDQR…QQLG), 371–381 (FTFEGAARSDD), 385–400 (FGRH…WEFI), 403–417 (YRFI…KAPN), 434–443 (QSKQWEGAFE), 449–458 (VNWRVSGYRN), 473–490 (YFNE…TANF), 494–509 (PLAH…SRNA), 517–529 (RRSK…QLDW), and 535–550 (DWGL…YDTD). Position 309 (T309) interacts with cyanocob(III)alamin. R517 contributes to the cyanocob(III)alamin binding site. Y551 provides a ligand contact to cyanocob(III)alamin. 3 consecutive transmembrane segments (beta stranded) span residues 556 to 570 (PVKM…LAVS), 583 to 594 (IANRFDKDYETV), and 600 to 612 (AGRE…SYTF). The TonB C-terminal box signature appears at 595–612 (YGYATAGREYTLSGSYTF).

It belongs to the TonB-dependent receptor family. BtuB (TC 1.B.14.3.1) subfamily.

Its subcellular location is the cell outer membrane. In terms of biological role, involved in the active translocation of vitamin B12 (cyanocobalamin) across the outer membrane to the periplasmic space. It derives its energy for transport by interacting with the trans-periplasmic membrane protein TonB. This Citrobacter freundii protein is Vitamin B12 transporter BtuB.